Reading from the N-terminus, the 499-residue chain is FAD-dependent oxidoreductase domain-containing protein 1 (499 aa).

Residues 75–95 (ERADVVIVGGGVMGWSIAYWL) form a helical membrane-spanning segment.

The cofactor is FAD.

It localises to the mitochondrion inner membrane. Its function is as follows. Required for the assembly of the mitochondrial membrane respiratory chain NADH dehydrogenase (Complex I). Involved in mid-late stages of complex I assembly. The polypeptide is FAD-dependent oxidoreductase domain-containing protein 1 (foxred1) (Xenopus laevis (African clawed frog)).